Reading from the N-terminus, the 253-residue chain is Carboxy-S-adenosyl-L-methionine synthase (253 aa).

S-adenosyl-L-methionine is bound by residues Tyr49, 74–76 (GCS), 98–99 (DN), and Asn141.

The protein belongs to the class I-like SAM-binding methyltransferase superfamily. Cx-SAM synthase family.

It catalyses the reaction prephenate + S-adenosyl-L-methionine = carboxy-S-adenosyl-L-methionine + 3-phenylpyruvate + H2O. Its function is as follows. Catalyzes the conversion of S-adenosyl-L-methionine (SAM) to carboxy-S-adenosyl-L-methionine (Cx-SAM). The protein is Carboxy-S-adenosyl-L-methionine synthase of Trichodesmium erythraeum (strain IMS101).